We begin with the raw amino-acid sequence, 316 residues long: Dehydrogenase/reductase SDR family protein 7-like (316 aa).

Residues 1 to 18 (MFFYKIIYFIGFPYIVLR) lie on the Cytoplasmic side of the membrane. A helical; Signal-anchor for type II membrane protein membrane pass occupies residues 19-39 (LIVSIILPIASLYFIYCNFIA). Residues 40–316 (PKLREKPESS…HKFASSSVKK (277 aa)) are Peroxisomal-facing. 56–80 (IITGASSGIGAELAKKYARLGCKVT) lines the NAD(+) pocket. S194 contributes to the substrate binding site. Y207 (proton acceptor) is an active-site residue.

This sequence belongs to the short-chain dehydrogenases/reductases (SDR) family.

Its subcellular location is the peroxisome membrane. Functionally, putative oxidoreductase. The polypeptide is Dehydrogenase/reductase SDR family protein 7-like (Dictyostelium discoideum (Social amoeba)).